A 497-amino-acid polypeptide reads, in one-letter code: Catalase-2 (497 aa).

Residues His71 and Asn144 contribute to the active site. Tyr354 lines the heme pocket.

Belongs to the catalase family. Requires heme as cofactor.

It carries out the reaction 2 H2O2 = O2 + 2 H2O. Functionally, catalase involved in the oxidative stress response serving to protect cells from toxicity. For instance plays a role in defending against oxidative damage induced by excessive copper stress. Not required for maintaining normal lifespan. The sequence is that of Catalase-2 from Caenorhabditis elegans.